Reading from the N-terminus, the 548-residue chain is MSEQKTSGSGSAAAARLQIEAEYKDKGPQWHRFYKEICETCDREAKEKQFSTSESERHTNRGLNRYRDVNPYDHSRIVLKRGSVDYINANLVQLERAERQYILTQGPLVDTVGHFWLMVWEQKSRAVLMLNKLMEKKQIKCHLYWPNEMGADKALKLPHVKLTVELVRLETYQNFVRRWFKLTDLETQQSREVMQFHYTTWPDFGIPSSPNAFLKFLQQVRDSGCLSRDVGPAVVHCSAGIGRSGTFCLVDCCLVLIDKYGECNVSKVLCELRSYRMGLIQTADQLDFSYQAIIEGIKKLHDPTFLDAEEPLISNDTETHTLDELPPPLPPRVQSLNLPLAPNSGGILSLNMRAAQANGAESIGKELSKDALNNFINQHDMIHDAEVADSRPLPPLPVRAFNDSDSDEDYLLDDDDEDDTDEDEEYETINEHDADPVNGHVPATTQPHADDVNANNEKPAVPVDEQHKANGIDPIPGQLPASPENELKRRKRNEYQASLEQKVNDMKRKQRENEDKQLAAKKRRSLLTYIAAGVVVGVICAYAYTKLG.

Over 1–525 (MSEQKTSGSG…KQLAAKKRRS (525 aa)) the chain is Cytoplasmic. The region spanning 33-296 (FYKEICETCD…DFSYQAIIEG (264 aa)) is the Tyrosine-protein phosphatase domain. The tract at residues 46–65 (KEKQFSTSESERHTNRGLNR) is disordered. A Phosphoserine modification is found at Ser-83. A Phosphotyrosine modification is found at Tyr-86. Substrate contacts are provided by residues Asp-203, 237–243 (CSAGIGR), and Gln-281. Residue Cys-237 is the Phosphocysteine intermediate of the active site. 3 short sequence motifs (PXXP motif (SH3-binding)) span residues 327 to 330 (PPLP), 339 to 342 (PLAP), and 394 to 397 (PPLP). The segment at 386 to 517 (EVADSRPLPP…RKQRENEDKQ (132 aa)) is disordered. Residues 404–428 (SDSDEDYLLDDDDEDDTDEDEEYET) show a composition bias toward acidic residues. Short sequence motifs (PXXP motif (SH3-binding)) lie at residues 459 to 462 (PAVP) and 480 to 483 (PASP). Basic and acidic residues predominate over residues 502–517 (KVNDMKRKQRENEDKQ). The chain crosses the membrane as a helical span at residues 526–545 (LLTYIAAGVVVGVICAYAYT). The Extracellular segment spans residues 546–548 (KLG).

This sequence belongs to the protein-tyrosine phosphatase family. Non-receptor class 1 subfamily. As to quaternary structure, interacts (via C-terminus) with dock/dreadlocks; this interaction is independent of insulin stimulation and is required for dephosphorylation of the insulin-like receptor InR.

It is found in the cytoplasm. The protein localises to the membrane. The protein resides in the endomembrane system. It localises to the nucleus. It catalyses the reaction O-phospho-L-tyrosyl-[protein] + H2O = L-tyrosyl-[protein] + phosphate. In terms of biological role, non-receptor protein tyrosine phosphatase. Required for maintaining dock/dreadlocks in its non-phosphorylated state. Negative regulator of InR/insulin-like receptor signaling through dephosphorylation of tyrosines when recruited by dock/dreadlocks. This Drosophila melanogaster (Fruit fly) protein is Tyrosine-protein phosphatase non-receptor type 61F.